The primary structure comprises 1492 residues: Neogenin (1492 aa).

A signal peptide spans 1–36 (MAAEREAGRLLCTSSSRRCCPPPPLLLLLPLLLLLG). Residues 37 to 1136 (RPASGAAATK…PTSPLDSNML (1100 aa)) are Extracellular-facing. Ig-like C2-type domains are found at residues 63–158 (PFYF…AKLT), 163–249 (PRFT…AELK), 254–347 (PEEI…AELT), and 352–437 (PGFL…AQLI). An N-linked (GlcNAc...) asparagine glycan is attached at Asn84. Intrachain disulfides connect Cys85–Cys140, Cys184–Cys232, and Cys281–Cys331. Asn221 carries an N-linked (GlcNAc...) asparagine glycan. The N-linked (GlcNAc...) asparagine glycan is linked to Asn337. A disulfide bridge links Cys373 with Cys421. 6 Fibronectin type-III domains span residues 472 to 566 (APRD…TQPE), 572 to 662 (PAPN…TLSD), 667 to 762 (APQN…TFES), 772 to 862 (VPSS…RPHT), 887 to 986 (PPVG…LVPT), and 988 to 1085 (PPKD…TPKA). Residues Asn501 and Asn520 are each glycosylated (N-linked (GlcNAc...) asparagine). N-linked (GlcNAc...) asparagine glycosylation is found at Asn670 and Asn746. Residue Asn940 is glycosylated (N-linked (GlcNAc...) asparagine). Positions 1072-1128 (GPMSEAVQFRTPKADSSDKMPNDQALGSAGKGSRLPDLGSDYKPPMSGSNSPHGSPT) are disordered. A compositionally biased stretch (basic and acidic residues) spans 1083 to 1092 (PKADSSDKMP). Polar residues predominate over residues 1118 to 1128 (SGSNSPHGSPT). A helical transmembrane segment spans residues 1137–1157 (LVIIVSVGVITIVVVVVIAVF). Residues 1158-1492 (CTRRTTSHQK…MKDLNAITTA (335 aa)) are Cytoplasmic-facing. Disordered stretches follow at residues 1205-1237 (PIDK…SMDS), 1266-1300 (PKMM…HSSS), and 1321-1396 (SMSL…FAVP). Ser1209 and Ser1225 each carry phosphoserine. Polar residues predominate over residues 1222–1237 (PRNSQDITPVDNSMDS). Thr1229 carries the phosphothreonine modification. Polar residues-rich tracts occupy residues 1321–1353 (SMSL…TCCT) and 1361–1380 (ATSS…QSLP). At Ser1432 the chain carries Phosphoserine. Thr1435 bears the Phosphothreonine mark. Residues Ser1463, Ser1465, and Ser1466 each carry the phosphoserine modification.

This sequence belongs to the immunoglobulin superfamily. DCC family. As to quaternary structure, interacts with BMP2, BMP4, BMP6, and BMP7. Interacts with RGMA and RGMB. Interacts with MYO10. In terms of tissue distribution, widely expressed.

It localises to the cell membrane. In terms of biological role, multi-functional cell surface receptor regulating cell adhesion in many diverse developmental processes, including neural tube and mammary gland formation, myogenesis and angiogenesis. Receptor for members of the BMP, netrin, and repulsive guidance molecule (RGM) families. Netrin-Neogenin interactions result in a chemoattractive axon guidance response and cell-cell adhesion, the interaction between NEO1/Neogenin and RGMa and RGMb induces a chemorepulsive response. This chain is Neogenin, found in Mus musculus (Mouse).